The sequence spans 131 residues: MATKAKPAAASKKLCAEELIREFESAQQKTDLPEIYVGDTVRVGVRISEGNRERVQPYEGVVISKRHGGMNQTITVRRIFQGIGVERVFMVHSPQVANIKVERRGKVRRAKLFYLRERVGKATRVKQRFDR.

This sequence belongs to the bacterial ribosomal protein bL19 family.

Its function is as follows. This protein is located at the 30S-50S ribosomal subunit interface and may play a role in the structure and function of the aminoacyl-tRNA binding site. This is Large ribosomal subunit protein bL19 from Synechococcus sp. (strain CC9902).